A 343-amino-acid polypeptide reads, in one-letter code: Flavonoid 3'-O-methyltransferase FOMT (343 aa).

S-adenosyl-L-homocysteine is bound by residues Gly184, Asp207, Asp227, Met228, Met240, and Lys241. The active-site Proton acceptor is His245. Catalysis depends on residues Glu273 and Glu305.

Belongs to the class I-like SAM-binding methyltransferase superfamily. Cation-independent O-methyltransferase family. In terms of assembly, homodimer.

It catalyses the reaction 3',5-dihydroxy-3,4',7-trimethoxyflavone + S-adenosyl-L-methionine = 5-hydroxy-3,7,3',4'-tetramethoxyflavone + S-adenosyl-L-homocysteine + H(+). It functions in the pathway flavonoid metabolism. Its activity is regulated as follows. Inhibited by nickel (NiCl(2) and NiSO(4)) and para-chloromercuribenzoate. Catalyzes the 3'- or 5'-O-methylation of partially methylated flavonols, but does not accept quercetin or caffeate as substrates for methylation. The protein is Flavonoid 3'-O-methyltransferase FOMT of Chrysosplenium americanum (American golden saxifrage).